We begin with the raw amino-acid sequence, 191 residues long: Zinc finger protein GIS2 (191 aa).

The C2H2-type zinc-finger motif lies at 55 to 77 (FKCHYCFRNFPTSQALGGHQNAH).

Expressed in inflorescence meristems, floral meristems and stem epidermis.

It is found in the nucleus. Its function is as follows. Probable transcription factor required for the initiation of inflorescence trichomes in response to gibberellin and cytokinin. Is not involved in the regulation of trichome branching. Is functionally equivalent to ZFP8. The chain is Zinc finger protein GIS2 (GIS2) from Arabidopsis thaliana (Mouse-ear cress).